A 396-amino-acid polypeptide reads, in one-letter code: Stearoyl-[acyl-carrier-protein] 9-desaturase, chloroplastic (396 aa).

Residues Met1–Met33 constitute a chloroplast transit peptide. A Blocked amino end (Ala); partial modification is found at Ala34. Residues Glu138, Glu176, His179, Glu229, Glu262, and His265 each contribute to the Fe cation site.

It belongs to the fatty acid desaturase type 2 family. As to quaternary structure, homodimer. Requires Fe(2+) as cofactor. In terms of processing, most of the N-terminus is blocked.

Its subcellular location is the plastid. It localises to the chloroplast. It carries out the reaction octadecanoyl-[ACP] + 2 reduced [2Fe-2S]-[ferredoxin] + O2 + 2 H(+) = (9Z)-octadecenoyl-[ACP] + 2 oxidized [2Fe-2S]-[ferredoxin] + 2 H2O. It participates in lipid metabolism; fatty acid metabolism. In terms of biological role, converts stearoyl-ACP to oleoyl-ACP by introduction of a cis double bond between carbons 9 and 10 of the acyl chain. This is Stearoyl-[acyl-carrier-protein] 9-desaturase, chloroplastic from Carthamus tinctorius (Safflower).